Here is a 233-residue protein sequence, read N- to C-terminus: Large ribosomal subunit protein uL1 (233 aa).

This sequence belongs to the universal ribosomal protein uL1 family. In terms of assembly, part of the 50S ribosomal subunit.

Functionally, binds directly to 23S rRNA. The L1 stalk is quite mobile in the ribosome, and is involved in E site tRNA release. In terms of biological role, protein L1 is also a translational repressor protein, it controls the translation of the L11 operon by binding to its mRNA. The protein is Large ribosomal subunit protein uL1 of Shewanella woodyi (strain ATCC 51908 / MS32).